Consider the following 355-residue polypeptide: Probable dual-specificity RNA methyltransferase RlmN (355 aa).

Catalysis depends on E89, which acts as the Proton acceptor. The Radical SAM core domain maps to 95–322 (YENRKTVCLS…KRLGVPTSIR (228 aa)). The cysteines at positions 102 and 333 are disulfide-linked. Residues C109, C113, and C116 each contribute to the [4Fe-4S] cluster site. S-adenosyl-L-methionine contacts are provided by residues 159–160 (GE), S191, 214–216 (SLH), and N290. The active-site S-methylcysteine intermediate is the C333.

It belongs to the radical SAM superfamily. RlmN family. [4Fe-4S] cluster is required as a cofactor.

It localises to the cytoplasm. The enzyme catalyses adenosine(2503) in 23S rRNA + 2 reduced [2Fe-2S]-[ferredoxin] + 2 S-adenosyl-L-methionine = 2-methyladenosine(2503) in 23S rRNA + 5'-deoxyadenosine + L-methionine + 2 oxidized [2Fe-2S]-[ferredoxin] + S-adenosyl-L-homocysteine. The catalysed reaction is adenosine(37) in tRNA + 2 reduced [2Fe-2S]-[ferredoxin] + 2 S-adenosyl-L-methionine = 2-methyladenosine(37) in tRNA + 5'-deoxyadenosine + L-methionine + 2 oxidized [2Fe-2S]-[ferredoxin] + S-adenosyl-L-homocysteine. Functionally, specifically methylates position 2 of adenine 2503 in 23S rRNA and position 2 of adenine 37 in tRNAs. This chain is Probable dual-specificity RNA methyltransferase RlmN, found in Thermus thermophilus (strain ATCC BAA-163 / DSM 7039 / HB27).